A 212-amino-acid chain; its full sequence is Redox-sensing transcriptional repressor Rex (212 aa).

The segment at residues 17–56 is a DNA-binding region (H-T-H motif); that stretch reads LYARSLRYLLEEGVHSVSSQELGERINVTAAQIRKDLSYF. Residue 91 to 96 coordinates NAD(+); the sequence is GIGLLG.

Belongs to the transcriptional regulatory Rex family. In terms of assembly, homodimer.

It is found in the cytoplasm. In terms of biological role, modulates transcription in response to changes in cellular NADH/NAD(+) redox state. This chain is Redox-sensing transcriptional repressor Rex, found in Chloroflexus aurantiacus (strain ATCC 29366 / DSM 635 / J-10-fl).